We begin with the raw amino-acid sequence, 461 residues long: Cysteine--tRNA ligase (461 aa).

A Zn(2+)-binding site is contributed by cysteine 28. The short motif at 30–40 (ITVYDLCHIGH) is the 'HIGH' region element. Positions 209, 234, and 238 each coordinate Zn(2+). Residues 266-270 (KMSKS) carry the 'KMSKS' region motif. Lysine 269 is an ATP binding site.

Belongs to the class-I aminoacyl-tRNA synthetase family. Monomer. It depends on Zn(2+) as a cofactor.

The protein localises to the cytoplasm. The enzyme catalyses tRNA(Cys) + L-cysteine + ATP = L-cysteinyl-tRNA(Cys) + AMP + diphosphate. The polypeptide is Cysteine--tRNA ligase (Enterobacter sp. (strain 638)).